Here is a 57-residue protein sequence, read N- to C-terminus: Large ribosomal subunit protein bL32 (57 aa).

It belongs to the bacterial ribosomal protein bL32 family.

This chain is Large ribosomal subunit protein bL32, found in Halothermothrix orenii (strain H 168 / OCM 544 / DSM 9562).